The following is a 659-amino-acid chain: Threonine--tRNA ligase (659 aa).

Residues 1–61 (MSAVPELRIT…ADGDVVEEIR (61 aa)) form the TGS domain. The tract at residues 260–555 (DHRKLGVELD…LLEHYAGAFP (296 aa)) is catalytic. Zn(2+) contacts are provided by Cys-353, His-404, and His-532.

Belongs to the class-II aminoacyl-tRNA synthetase family. As to quaternary structure, homodimer. It depends on Zn(2+) as a cofactor.

Its subcellular location is the cytoplasm. It catalyses the reaction tRNA(Thr) + L-threonine + ATP = L-threonyl-tRNA(Thr) + AMP + diphosphate + H(+). Catalyzes the attachment of threonine to tRNA(Thr) in a two-step reaction: L-threonine is first activated by ATP to form Thr-AMP and then transferred to the acceptor end of tRNA(Thr). Also edits incorrectly charged L-seryl-tRNA(Thr). The sequence is that of Threonine--tRNA ligase from Thermobifida fusca (strain YX).